The sequence spans 338 residues: E3 ubiquitin-protein ligase SPL1 (338 aa).

A helical transmembrane segment spans residues 1–21 (MIHLAGFTCCLGGVALYLLTR). Over 22 to 223 (STGRDIKSIT…KLGDLSRRFK (202 aa)) the chain is Chloroplast intermembrane. Residues 224–246 (YASMGLTVLGVILISKPVIEYIL) form a helical membrane-spanning segment. Over 247–338 (KRIEDTLERR…IQQVLKIYRH (92 aa)) the chain is Cytoplasmic. The RING-type zinc finger occupies 291 to 326 (CVVCLDQKYNTAFVECGHMCCCTPCSLQLRTCPLCR).

The protein localises to the plastid. It localises to the chloroplast outer membrane. The catalysed reaction is S-ubiquitinyl-[E2 ubiquitin-conjugating enzyme]-L-cysteine + [acceptor protein]-L-lysine = [E2 ubiquitin-conjugating enzyme]-L-cysteine + N(6)-ubiquitinyl-[acceptor protein]-L-lysine.. The protein operates within protein modification; protein ubiquitination. Functionally, possesses E3 ubiquitin-protein ligase activity. The chain is E3 ubiquitin-protein ligase SPL1 from Arabidopsis thaliana (Mouse-ear cress).